A 235-amino-acid chain; its full sequence is Elongation factor Tu, chloroplastic (235 aa).

The tr-type G domain occupies 1–125; it reads KNMITGAAQM…AVDSYIPTPE (125 aa). 47-50 contributes to the GTP binding site; it reads NKED.

The protein belongs to the TRAFAC class translation factor GTPase superfamily. Classic translation factor GTPase family. EF-Tu/EF-1A subfamily.

It localises to the plastid. The protein localises to the chloroplast. It carries out the reaction GTP + H2O = GDP + phosphate + H(+). In terms of biological role, GTP hydrolase that promotes the GTP-dependent binding of aminoacyl-tRNA to the A-site of ribosomes during protein biosynthesis. The chain is Elongation factor Tu, chloroplastic (tufA) from Mantoniella squamata (Unicellular alga).